The chain runs to 68 residues: Conotoxin Cal14.13a (68 aa).

Positions 1–21 (MKLCVVIVLLMLAMPFNGGEA) are cleaved as a signal peptide. The propeptide occupies 22–38 (SRFFNQHARSQRSGMKT). A Valine amide modification is found at V66.

Contains 2 disulfide bonds. In terms of tissue distribution, expressed by the venom duct.

The protein resides in the secreted. Probable neurotoxin with unknown target. Possibly targets ion channels. This is Conotoxin Cal14.13a from Californiconus californicus (California cone).